The primary structure comprises 239 residues: Ribosomal RNA small subunit methyltransferase G (239 aa).

S-adenosyl-L-methionine is bound by residues Gly77, Phe82, 128–129, and Arg147; that span reads AE. The tract at residues 219-239 is disordered; sequence RKTPKKYPRKPGTPNKLPIEK.

It belongs to the methyltransferase superfamily. RNA methyltransferase RsmG family.

It is found in the cytoplasm. Functionally, specifically methylates the N7 position of guanine in position 535 of 16S rRNA. The chain is Ribosomal RNA small subunit methyltransferase G from Bacillus cytotoxicus (strain DSM 22905 / CIP 110041 / 391-98 / NVH 391-98).